The following is a 318-amino-acid chain: MKILLANPRGFCAGVSRAVETVEKVLEVEKSPVYVRHEVVHNKVVVDSLKKKGVVFVKEVDEVPDDAVCIFSAHGVSLKVEEAAAKKNLVLYDATCPLVTKVHRGVRLASNNDAECILIGHKGHPEVQGTMGQYRSKKGAIYLIESEEDLNKLTIKDPDNLYYATQTTLSVDETHGIIQALKDKYPNIKGPKKEDICYATQNRQTAIKAMLKHIDVLVVVGSQNSSNSNRLKELATLEGIDAYLVDNPKDVDKLWFDNKKVCGVSAGASAPEYLVQQIISQISKVCSTEVEEFEGIKEEVYFPLPRLLKQKIGTGKVE.

A [4Fe-4S] cluster-binding site is contributed by Cys12. (2E)-4-hydroxy-3-methylbut-2-enyl diphosphate-binding residues include His41 and His74. The dimethylallyl diphosphate site is built by His41 and His74. Isopentenyl diphosphate-binding residues include His41 and His74. [4Fe-4S] cluster is bound at residue Cys96. His124 is a binding site for (2E)-4-hydroxy-3-methylbut-2-enyl diphosphate. A dimethylallyl diphosphate-binding site is contributed by His124. His124 contacts isopentenyl diphosphate. Residue Glu126 is the Proton donor of the active site. Thr167 contributes to the (2E)-4-hydroxy-3-methylbut-2-enyl diphosphate binding site. Cys197 lines the [4Fe-4S] cluster pocket. (2E)-4-hydroxy-3-methylbut-2-enyl diphosphate is bound by residues Ser225, Ser226, Asn227, and Ser269. Positions 225, 226, 227, and 269 each coordinate dimethylallyl diphosphate. 4 residues coordinate isopentenyl diphosphate: Ser225, Ser226, Asn227, and Ser269.

This sequence belongs to the IspH family. Requires [4Fe-4S] cluster as cofactor.

The catalysed reaction is isopentenyl diphosphate + 2 oxidized [2Fe-2S]-[ferredoxin] + H2O = (2E)-4-hydroxy-3-methylbut-2-enyl diphosphate + 2 reduced [2Fe-2S]-[ferredoxin] + 2 H(+). It carries out the reaction dimethylallyl diphosphate + 2 oxidized [2Fe-2S]-[ferredoxin] + H2O = (2E)-4-hydroxy-3-methylbut-2-enyl diphosphate + 2 reduced [2Fe-2S]-[ferredoxin] + 2 H(+). It functions in the pathway isoprenoid biosynthesis; dimethylallyl diphosphate biosynthesis; dimethylallyl diphosphate from (2E)-4-hydroxy-3-methylbutenyl diphosphate: step 1/1. Its pathway is isoprenoid biosynthesis; isopentenyl diphosphate biosynthesis via DXP pathway; isopentenyl diphosphate from 1-deoxy-D-xylulose 5-phosphate: step 6/6. Its function is as follows. Catalyzes the conversion of 1-hydroxy-2-methyl-2-(E)-butenyl 4-diphosphate (HMBPP) into a mixture of isopentenyl diphosphate (IPP) and dimethylallyl diphosphate (DMAPP). Acts in the terminal step of the DOXP/MEP pathway for isoprenoid precursor biosynthesis. This Francisella tularensis subsp. holarctica (strain LVS) protein is 4-hydroxy-3-methylbut-2-enyl diphosphate reductase.